A 92-amino-acid chain; its full sequence is C-C motif chemokine 4 (92 aa).

The first 23 residues, 1 to 23, serve as a signal peptide directing secretion; sequence MKLCVTVLSLLVLVAAFCSPALS. Intrachain disulfides connect cysteine 34–cysteine 58 and cysteine 35–cysteine 74.

This sequence belongs to the intercrine beta (chemokine CC) family. Homodimer. Interacts with CCR5.

It is found in the secreted. Monokine with inflammatory and chemokinetic properties. This Canis lupus familiaris (Dog) protein is C-C motif chemokine 4 (CCL4).